We begin with the raw amino-acid sequence, 203 residues long: Transmembrane emp24 domain-containing protein (203 aa).

Residues 1 to 22 (MASIRLLPSCIVLMFLARSSLC) form the signal peptide. The Lumenal segment spans residues 23–170 (YFITIDAHGE…RSINDNTNSR (148 aa)). One can recognise a GOLD domain in the interval 32–114 (EECFHDKVTS…PKVLKFSMDI (83 aa)). Residues 171–191 (VVWWSFFESLVLVAMTLGQVY) form a helical membrane-spanning segment. Residues 192–203 (YLKRFFEVRRVV) are Cytoplasmic-facing.

Belongs to the EMP24/GP25L family.

It localises to the cytoplasmic vesicle membrane. Could have a role in the budding of coatomer-coated and other species of coated vesicles. In Nematostella vectensis (Starlet sea anemone), this protein is Transmembrane emp24 domain-containing protein.